A 234-amino-acid chain; its full sequence is Probable transcriptional regulatory protein Pfl01_3677 (234 aa).

It belongs to the TACO1 family.

It is found in the cytoplasm. The polypeptide is Probable transcriptional regulatory protein Pfl01_3677 (Pseudomonas fluorescens (strain Pf0-1)).